The sequence spans 475 residues: MISLLTYTLKNLPNTSKWALRFCMRPLSSSSQLQAAAASQTKSKKTLAKPNIRNIVVVDGVRTPFLLSGTSYKDLMPHDLARAALSGLLHRTSVPKDVVDYIIFGTVIQEVKTSNVAREAALGAGFSDKTPAHTVTMACISSNQAMTTAVGLIASGQCDVVVAGGVELMSDIPIRHSRKMRKMMLDLNKAKTLAQRLSIISKFRLNFLSPELPAVSEFSTSETMGHSADRLAAAFAISREEQDEYALRSHSLAKKAQDEGLLSDVVPFKVPGRDTVTQDNGIRPSSLDQMAKLKPAFIKPYGTVTAANSSFLTDGASAVLIMAEEKALAMGYKPKAYLRDFMYVSQDPKDQLLLGPTYATPKVLEKAGLTMNDIDVFEFHEAFSGQILANLKAMDSDWFAQNYMGRKAKVGLPPLEKFNNWGGSLSLGHPFGATGCRLVMAAANRLRKEGGQYGLVAACAAGGQGHAMIVEAYPK.

Residues 1–34 (MISLLTYTLKNLPNTSKWALRFCMRPLSSSSQLQ) constitute a mitochondrion transit peptide. K73 is modified (N6-acetyllysine; alternate). An N6-succinyllysine; alternate modification is found at K73. Catalysis depends on C139, which acts as the Acyl-thioester intermediate. The stretch at 174–221 (IRHSRKMRKMMLDLNKAKTLAQRLSIISKFRLNFLSPELPAVSEFSTS) is an intramembrane region. Position 189 is an N6-acetyllysine; alternate (K189). Position 189 is an N6-succinyllysine; alternate (K189). N6-succinyllysine occurs at positions 191 and 292. Position 294 is an N6-acetyllysine; alternate (K294). The residue at position 294 (K294) is an N6-succinyllysine; alternate. K299 is modified (N6-acetyllysine). Residue K333 is modified to N6-acetyllysine; alternate. The residue at position 333 (K333) is an N6-succinyllysine; alternate. N6-acetyllysine is present on residues K349 and K362. C459 functions as the Proton donor/acceptor in the catalytic mechanism.

This sequence belongs to the thiolase-like superfamily. Thiolase family. In terms of assembly, heterotetramer of 2 alpha/HADHA and 2 beta/HADHB subunits; forms the mitochondrial trifunctional enzyme. Also purified as higher order heterooligomers including a 4 alpha/HADHA and 4 beta/HADHB heterooligomer which physiological significance remains unclear. The mitochondrial trifunctional enzyme interacts with MTLN. Interacts with RSAD2/viperin.

Its subcellular location is the mitochondrion. The protein resides in the mitochondrion inner membrane. It localises to the mitochondrion outer membrane. The protein localises to the endoplasmic reticulum. The enzyme catalyses an acyl-CoA + acetyl-CoA = a 3-oxoacyl-CoA + CoA. The catalysed reaction is butanoyl-CoA + acetyl-CoA = 3-oxohexanoyl-CoA + CoA. It catalyses the reaction hexanoyl-CoA + acetyl-CoA = 3-oxooctanoyl-CoA + CoA. It carries out the reaction octanoyl-CoA + acetyl-CoA = 3-oxodecanoyl-CoA + CoA. The enzyme catalyses decanoyl-CoA + acetyl-CoA = 3-oxododecanoyl-CoA + CoA. The catalysed reaction is dodecanoyl-CoA + acetyl-CoA = 3-oxotetradecanoyl-CoA + CoA. It catalyses the reaction tetradecanoyl-CoA + acetyl-CoA = 3-oxohexadecanoyl-CoA + CoA. It participates in lipid metabolism; fatty acid beta-oxidation. Its function is as follows. Mitochondrial trifunctional enzyme catalyzes the last three of the four reactions of the mitochondrial beta-oxidation pathway. The mitochondrial beta-oxidation pathway is the major energy-producing process in tissues and is performed through four consecutive reactions breaking down fatty acids into acetyl-CoA. Among the enzymes involved in this pathway, the trifunctional enzyme exhibits specificity for long-chain fatty acids. Mitochondrial trifunctional enzyme is a heterotetrameric complex composed of two proteins, the trifunctional enzyme subunit alpha/HADHA carries the 2,3-enoyl-CoA hydratase and the 3-hydroxyacyl-CoA dehydrogenase activities, while the trifunctional enzyme subunit beta/HADHB described here bears the 3-ketoacyl-CoA thiolase activity. This is Trifunctional enzyme subunit beta, mitochondrial (HADHB) from Bos taurus (Bovine).